We begin with the raw amino-acid sequence, 456 residues long: Bifunctional protein GlmU (456 aa).

Residues 1–229 are pyrophosphorylase; sequence MLNNAMSVVI…LSEVEGVNNR (229 aa). Residues 11–14, Lys-25, Gln-76, 81–82, 103–105, Gly-140, Glu-154, Asn-169, and Asn-227 each bind UDP-N-acetyl-alpha-D-glucosamine; these read LAAG, GT, and YGD. Asp-105 is a Mg(2+) binding site. Residue Asn-227 coordinates Mg(2+). The linker stretch occupies residues 230–250; it reads LQLSRLERVYQSEQAEKLLLA. Positions 251 to 456 are N-acetyltransferase; sequence GVMLRDPARF…EGWRRPVKKK (206 aa). The UDP-N-acetyl-alpha-D-glucosamine site is built by Arg-333 and Lys-351. Catalysis depends on His-363, which acts as the Proton acceptor. 2 residues coordinate UDP-N-acetyl-alpha-D-glucosamine: Tyr-366 and Asn-377. Residues Ala-380, 386–387, Ser-405, Ala-423, and Arg-440 each bind acetyl-CoA; that span reads NY.

The protein in the N-terminal section; belongs to the N-acetylglucosamine-1-phosphate uridyltransferase family. This sequence in the C-terminal section; belongs to the transferase hexapeptide repeat family. In terms of assembly, homotrimer. Mg(2+) serves as cofactor.

It localises to the cytoplasm. The enzyme catalyses alpha-D-glucosamine 1-phosphate + acetyl-CoA = N-acetyl-alpha-D-glucosamine 1-phosphate + CoA + H(+). It carries out the reaction N-acetyl-alpha-D-glucosamine 1-phosphate + UTP + H(+) = UDP-N-acetyl-alpha-D-glucosamine + diphosphate. The protein operates within nucleotide-sugar biosynthesis; UDP-N-acetyl-alpha-D-glucosamine biosynthesis; N-acetyl-alpha-D-glucosamine 1-phosphate from alpha-D-glucosamine 6-phosphate (route II): step 2/2. Its pathway is nucleotide-sugar biosynthesis; UDP-N-acetyl-alpha-D-glucosamine biosynthesis; UDP-N-acetyl-alpha-D-glucosamine from N-acetyl-alpha-D-glucosamine 1-phosphate: step 1/1. It functions in the pathway bacterial outer membrane biogenesis; LPS lipid A biosynthesis. Catalyzes the last two sequential reactions in the de novo biosynthetic pathway for UDP-N-acetylglucosamine (UDP-GlcNAc). The C-terminal domain catalyzes the transfer of acetyl group from acetyl coenzyme A to glucosamine-1-phosphate (GlcN-1-P) to produce N-acetylglucosamine-1-phosphate (GlcNAc-1-P), which is converted into UDP-GlcNAc by the transfer of uridine 5-monophosphate (from uridine 5-triphosphate), a reaction catalyzed by the N-terminal domain. The sequence is that of Bifunctional protein GlmU from Shigella dysenteriae serotype 1 (strain Sd197).